The following is a 628-amino-acid chain: DNA mismatch repair protein MutL (628 aa).

Residues 332–416 (PTSAMPAPGN…ASTAPPLSEE (85 aa)) are disordered. Polar residues predominate over residues 375–396 (EGSSRSDVPYPSASQVTETTDS).

This sequence belongs to the DNA mismatch repair MutL/HexB family.

This protein is involved in the repair of mismatches in DNA. It is required for dam-dependent methyl-directed DNA mismatch repair. May act as a 'molecular matchmaker', a protein that promotes the formation of a stable complex between two or more DNA-binding proteins in an ATP-dependent manner without itself being part of a final effector complex. This Syntrophotalea carbinolica (strain DSM 2380 / NBRC 103641 / GraBd1) (Pelobacter carbinolicus) protein is DNA mismatch repair protein MutL.